Here is a 267-residue protein sequence, read N- to C-terminus: MNPGRLGLAPLLQENPLWISWHDSNWIPVLNPGNVMDYFSEKSNPFYDRTCNNEIVRMQRQSLELLNNMTGVEYIPLHVQDPILYVIRKQHRHSPTEATPMADYYIIAGTVYQAPDLASVFNSRILSTVHHLQTAFDEASSYSRYHPSKGYSWDFSSNKAIAEKTKTQTKKEAPVKEEPSSIFQRQRVDMLLGDLLRKFPLPLPQMTNNPTGGNPSDTANASNNHGGAAGDSDHVGADATLIKQEPTEGGVGRAGNNDVPPEKKMKL.

Residues 202-267 (PLPQMTNNPT…DVPPEKKMKL (66 aa)) are disordered. A compositionally biased stretch (polar residues) spans 205–218 (QMTNNPTGGNPSDT).

This sequence belongs to the Mediator complex subunit 6 family. As to quaternary structure, component of the Mediator complex.

It localises to the nucleus. Component of the Mediator complex, a coactivator involved in the regulated transcription of nearly all RNA polymerase II-dependent genes. Mediator functions as a bridge to convey information from gene-specific regulatory proteins to the basal RNA polymerase II transcription machinery. Mediator is recruited to promoters by direct interactions with regulatory proteins and serves as a scaffold for the assembly of a functional preinitiation complex with RNA polymerase II and the general transcription factors. This chain is Mediator of RNA polymerase II transcription subunit 6 (MED6), found in Anopheles gambiae (African malaria mosquito).